A 362-amino-acid chain; its full sequence is MKESIKLKLESLSDRYDELAALLGVAEVIMDQDLFRAYSKEYAELEPVVKCFNEFQQIDENIAEAELMMTDADPDIKEMGVEEYKAGLAQKEELQLVLQKLLLPKDPNDSRNVFLEVRAGTGGDEASIFSGDLFRMYSRYAETQRWKVEIVSASDGEHGGYKEVIARIVGEGAYSKLKFESGAHRVQRVPATESQGRIHTSACTVAVMPEMDEVDDIIINKSDLRIDTFRASGAGGQHVNKTDSAIRLTHIPTGVVVECQEERSQHKNRAKAMSLLASRLQAAELEKAASEQSETRKSLVGSGDRSERIRTYNYPQGRVTDHRINLTLYKLDEIVAGELDSLINPLVNEFQAEQLAALSGDN.

At glutamine 237 the chain carries N5-methylglutamine.

The protein belongs to the prokaryotic/mitochondrial release factor family. Post-translationally, methylated by PrmC. Methylation increases the termination efficiency of RF1.

The protein localises to the cytoplasm. In terms of biological role, peptide chain release factor 1 directs the termination of translation in response to the peptide chain termination codons UAG and UAA. The chain is Peptide chain release factor 1 from Marinomonas sp. (strain MWYL1).